We begin with the raw amino-acid sequence, 257 residues long: Hydroxyethylthiazole kinase (257 aa).

M49 contributes to the substrate binding site. ATP is bound by residues R124 and T170. G197 lines the substrate pocket.

The protein belongs to the Thz kinase family. It depends on Mg(2+) as a cofactor.

The catalysed reaction is 5-(2-hydroxyethyl)-4-methylthiazole + ATP = 4-methyl-5-(2-phosphooxyethyl)-thiazole + ADP + H(+). It functions in the pathway cofactor biosynthesis; thiamine diphosphate biosynthesis; 4-methyl-5-(2-phosphoethyl)-thiazole from 5-(2-hydroxyethyl)-4-methylthiazole: step 1/1. Its function is as follows. Catalyzes the phosphorylation of the hydroxyl group of 4-methyl-5-beta-hydroxyethylthiazole (THZ). In Klebsiella pneumoniae (strain 342), this protein is Hydroxyethylthiazole kinase.